A 326-amino-acid chain; its full sequence is Deoxyuridine 5'-triphosphate nucleotidohydrolase (326 aa).

Substrate-binding positions include Arg218–Ser220 and Phe321–Gly322.

The protein belongs to the dUTPase family. It depends on Mg(2+) as a cofactor.

The catalysed reaction is dUTP + H2O = dUMP + diphosphate + H(+). Its function is as follows. Involved in nucleotide metabolism: produces dUMP, the immediate precursor of thymidine nucleotides and decreases the intracellular concentration of dUTP to avoid uracil incorporation into viral DNA. In Equus caballus (Horse), this protein is Deoxyuridine 5'-triphosphate nucleotidohydrolase.